A 236-amino-acid polypeptide reads, in one-letter code: NLP effector protein 3 (236 aa).

A signal peptide spans 1-19; it reads MNLLGFLAVVALSTASVQA. The Conserved undecapeptide motif I motif lies at 103 to 113; sequence AIMYSWYFPKD. The short motif at 120–126 is the Hepta-peptide GHRHDWE motif II element; that stretch reads GHRHDWE.

This sequence belongs to the Necrosis inducing protein (NPP1) family.

It is found in the secreted. Secreted effector that contributes to virulence during infection by P.capsici. Induces distinct chlorosis at 3 days after inoculation of host C.annuum leaves, and all the chlorotic areas gradually turn brown and become moderately necrotic at 7 days after inoculation. Leads only to chlorotic areas, without necrosis at 7 days after non-host N.benthamiana leaves infection. Induces cell death in hot pepper. The chain is NLP effector protein 3 from Phytophthora capsici.